Here is a 120-residue protein sequence, read N- to C-terminus: NAD(P)H-quinone oxidoreductase subunit 3, chloroplastic (120 aa).

The next 3 helical transmembrane spans lie at 9–29, 64–84, and 88–108; these read IFWA…LISG, MFAL…PWAM, and VLGV…IVGS.

The protein belongs to the complex I subunit 3 family. As to quaternary structure, NDH is composed of at least 16 different subunits, 5 of which are encoded in the nucleus.

It is found in the plastid. Its subcellular location is the chloroplast thylakoid membrane. It catalyses the reaction a plastoquinone + NADH + (n+1) H(+)(in) = a plastoquinol + NAD(+) + n H(+)(out). The catalysed reaction is a plastoquinone + NADPH + (n+1) H(+)(in) = a plastoquinol + NADP(+) + n H(+)(out). In terms of biological role, NDH shuttles electrons from NAD(P)H:plastoquinone, via FMN and iron-sulfur (Fe-S) centers, to quinones in the photosynthetic chain and possibly in a chloroplast respiratory chain. The immediate electron acceptor for the enzyme in this species is believed to be plastoquinone. Couples the redox reaction to proton translocation, and thus conserves the redox energy in a proton gradient. In Gossypium hirsutum (Upland cotton), this protein is NAD(P)H-quinone oxidoreductase subunit 3, chloroplastic.